Reading from the N-terminus, the 210-residue chain is Glutathione S-transferase P 2 (210 aa).

The region spanning 2-81 (PPYTIVYFPS…HLGRSLGLYG (80 aa)) is the GST N-terminal domain. Glutathione-binding positions include Tyr-8, Arg-14, Trp-39, Lys-45, 52-53 (QL), and 65-66 (QS). Residues 83 to 204 (NQREAAQVDM…SSPEHVNRPI (122 aa)) enclose the GST C-terminal domain.

It belongs to the GST superfamily. Pi family. Homodimer. Selectively expressed in gall bladder, colon, heart, and skeletal muscle.

The catalysed reaction is RX + glutathione = an S-substituted glutathione + a halide anion + H(+). Conjugation of reduced glutathione to a wide number of exogenous and endogenous hydrophobic electrophiles. Cannot metabolize 1-chloro-2,4-dinitrobenzene. This Mus musculus (Mouse) protein is Glutathione S-transferase P 2 (Gstp2).